The sequence spans 682 residues: Methionine--tRNA ligase (682 aa).

The short motif at 14-24 is the 'HIGH' region element; sequence PYANGSIHLGH. Cysteine 145, cysteine 148, cysteine 158, and cysteine 161 together coordinate Zn(2+). The 'KMSKS' region motif lies at 331–335; it reads KMSKS. Lysine 334 serves as a coordination point for ATP. One can recognise a tRNA-binding domain in the interval 580–682; it reads AFAAIDLRVA…SGARPGQRIK (103 aa).

It belongs to the class-I aminoacyl-tRNA synthetase family. MetG type 1 subfamily. Homodimer. Zn(2+) serves as cofactor.

It localises to the cytoplasm. The enzyme catalyses tRNA(Met) + L-methionine + ATP = L-methionyl-tRNA(Met) + AMP + diphosphate. Its function is as follows. Is required not only for elongation of protein synthesis but also for the initiation of all mRNA translation through initiator tRNA(fMet) aminoacylation. The protein is Methionine--tRNA ligase of Pseudomonas syringae pv. syringae (strain B728a).